Consider the following 375-residue polypeptide: Formate dehydrogenase (375 aa).

The substrate site is built by Ile-94 and Asn-120. NAD(+)-binding positions include Arg-175–Ile-176, Asp-196, Pro-231–Lys-235, Thr-257, Asp-283, His-312–Gly-315, and Ser-358.

Belongs to the D-isomer specific 2-hydroxyacid dehydrogenase family. FDH subfamily. In terms of assembly, homodimer.

It is found in the cytoplasm. The enzyme catalyses formate + NAD(+) = CO2 + NADH. Functionally, catalyzes the NAD(+)-dependent oxidation of formate to carbon dioxide. Formate oxidation is the final step in the methanol oxidation pathway in methylotrophic microorganisms. Has a role in the detoxification of exogenous formate in non-methylotrophic organisms. This chain is Formate dehydrogenase, found in Neurospora crassa (strain ATCC 24698 / 74-OR23-1A / CBS 708.71 / DSM 1257 / FGSC 987).